The chain runs to 299 residues: Elongation factor Ts (299 aa).

An involved in Mg(2+) ion dislocation from EF-Tu region spans residues 81–84 (TDFV).

This sequence belongs to the EF-Ts family.

The protein resides in the cytoplasm. Its function is as follows. Associates with the EF-Tu.GDP complex and induces the exchange of GDP to GTP. It remains bound to the aminoacyl-tRNA.EF-Tu.GTP complex up to the GTP hydrolysis stage on the ribosome. The sequence is that of Elongation factor Ts from Halothermothrix orenii (strain H 168 / OCM 544 / DSM 9562).